Consider the following 255-residue polypeptide: 1-acyl-sn-glycerol-3-phosphate acyltransferase (255 aa).

The HXXXXD motif signature appears at 78–83 (HVSWLD).

This sequence belongs to the 1-acyl-sn-glycerol-3-phosphate acyltransferase family.

Its subcellular location is the cell inner membrane. It carries out the reaction a 1-acyl-sn-glycero-3-phosphate + an acyl-CoA = a 1,2-diacyl-sn-glycero-3-phosphate + CoA. It participates in phospholipid metabolism; CDP-diacylglycerol biosynthesis; CDP-diacylglycerol from sn-glycerol 3-phosphate: step 2/3. In terms of biological role, converts lysophosphatidic acid (LPA) into phosphatidic acid by incorporating acyl moiety at the 2 position. The sequence is that of 1-acyl-sn-glycerol-3-phosphate acyltransferase (plsC) from Neisseria gonorrhoeae.